Reading from the N-terminus, the 109-residue chain is Spermidine export protein MdtI (109 aa).

4 consecutive transmembrane segments (helical) span residues 6–26 (WVHAAWLALAIVLEIVANVFL), 36–56 (IFGLLSLAAVLAAFSALSQAV), 64–84 (AYALWGGFGIAATLAAGWILF), and 88–108 (LNRKGWIGLVLLLAGMIMVKL).

The protein belongs to the drug/metabolite transporter (DMT) superfamily. Small multidrug resistance (SMR) (TC 2.A.7.1) family. MdtI subfamily. As to quaternary structure, forms a complex with MdtJ.

It localises to the cell inner membrane. Catalyzes the excretion of spermidine. In Escherichia coli O139:H28 (strain E24377A / ETEC), this protein is Spermidine export protein MdtI.